A 425-amino-acid polypeptide reads, in one-letter code: bZIP transcription factor RISBZ2 (425 aa).

Disordered regions lie at residues 1 to 50 and 169 to 257; these read MERV…GGGG and NSIG…AAHL. The segment covering 30–50 has biased composition (gly residues); it reads QGGGGVASGGGGGVAGGGGGG. Over residues 171-182 the composition is skewed to polar residues; that stretch reads IGGNATPVQNML. Positions 213 to 222 are enriched in acidic residues; it reads SDDDDMEGEA. Residues 231 to 247 show a composition bias toward basic and acidic residues; the sequence is ADQRLQRRKQSNRESAR. One can recognise a bZIP domain in the interval 232–295; the sequence is DQRLQRRKQS…NDAAVDNRVL (64 aa). Residues 234-253 form a basic motif region; the sequence is RLQRRKQSNRESARRSRSRK. The segment at 260–274 is leucine-zipper; it reads LEAQVSQLRVENSSL. The disordered stretch occupies residues 334–354; that stretch reads MPFNSSPSEATSDAAVPIQDD.

In terms of assembly, heterodimer with RISBZ1/BZIP58.

The protein localises to the nucleus. Transcriptional activator that binds to the DNA specific sequence 5'-GCCACGT[AC]AG-3' found in the alpha-globulin gene promoter. Does not bind to promoters of other major storage genes such as glutelin, prolamin and albumin. Binds to the DNA specific sequence 5'-TGAGTCA-3' found in seed storage protein gene promoters. The protein is bZIP transcription factor RISBZ2 of Oryza sativa subsp. japonica (Rice).